The following is a 103-amino-acid chain: Small integral membrane protein 32 (103 aa).

The chain crosses the membrane as a helical span at residues 55–75 (YLLLFFLLLLSVALVVLFIGC).

The protein resides in the membrane. The protein is Small integral membrane protein 32 of Homo sapiens (Human).